The primary structure comprises 283 residues: Serine protease 57 (283 aa).

A signal peptide spans 1-31; sequence MGLGLRGWGRPLLTVATALMLPVKPPAGSWG. In terms of domain architecture, Peptidase S1 spans 34–263; sequence IIGGHEVTPH…FVAWIWDVVR (230 aa). A disulfide bond links C59 and C75. Residues H74 and D122 each act as charge relay system in the active site. N-linked (GlcNAc...) asparagine glycosylation is found at N129 and N189. 3 cysteine pairs are disulfide-bonded: C157/C224, C188/C202, and C214/C239. The active-site Charge relay system is the S218.

It belongs to the peptidase S1 family. In terms of processing, after cleavage of the signal peptide, the N-terminus is probably further processed by CTSC. Processing by CTSC is probably required for accumulation in cytoplasmic granules; in the absence of CTSC the protein does not accumulate. N-glycosylated. As to expression, detected in peripheral blood neutrophil granulocytes, but not in other types of leukocytes. Detected in neutrophils and neutrophil precursors in bone marrow (at protein level). Detected in myeloblasts and promyelocytes in bone marrow.

It localises to the cytoplasmic granule lumen. It is found in the secreted. Inhibited by SERPINA1, SERPINC1 and SERPING1. Functionally, serine protease that cleaves preferentially after Arg residues. Can also cleave after citrulline (deimidated arginine) and methylarginine residues. This chain is Serine protease 57 (PRSS57), found in Homo sapiens (Human).